A 1267-amino-acid polypeptide reads, in one-letter code: DNA-directed RNA polymerase subunit beta'' (1267 aa).

The Zn(2+) site is built by Cys-222, Cys-290, Cys-297, and Cys-300.

The protein belongs to the RNA polymerase beta' chain family. RpoC2 subfamily. As to quaternary structure, in plastids the minimal PEP RNA polymerase catalytic core is composed of four subunits: alpha, beta, beta', and beta''. When a (nuclear-encoded) sigma factor is associated with the core the holoenzyme is formed, which can initiate transcription. Zn(2+) serves as cofactor.

Its subcellular location is the plastid. It localises to the chloroplast. It catalyses the reaction RNA(n) + a ribonucleoside 5'-triphosphate = RNA(n+1) + diphosphate. In terms of biological role, DNA-dependent RNA polymerase catalyzes the transcription of DNA into RNA using the four ribonucleoside triphosphates as substrates. This Emiliania huxleyi (Coccolithophore) protein is DNA-directed RNA polymerase subunit beta''.